The following is a 320-amino-acid chain: Stress-induced-phosphoprotein 1 (320 aa).

TPR repeat units lie at residues 5–38 (AIAEKDLGNAAYKQKDFEKAHVHYDKAIELDPSN), 40–72 (TFYNNKAAVYFEEKKFAECVQFCEKAVEVGRET), 80–113 (AKAMSRAGNAFQKQNDLSLAVQWFHRSLSEFRDP), 140–173 (AQEEKNKGNEYFKKGDYPTAMRHYNEAVKRDPEN), 175–207 (ILYSNRAACLTKLMEFQRALDDCDTCIRLDSKF), and 208–241 (IKGYIRKAACLVAMREWSKAQRAYEDALQVDPSN). A disordered region spans residues 241 to 269 (NEEAREGVRNCLRSNDEDPEKAKERSLAD). Positions 242-269 (EEAREGVRNCLRSNDEDPEKAKERSLAD) are enriched in basic and acidic residues. Residues 269–308 (DPEVQEILRDPGMRMILEQMSNDPGAVREHLKNPEIFQKL) form the STI1 domain.

In terms of assembly, forms a complex with hsp-1/hsp70 and daf-21/hsp90. Interacts with daf-21/hsp90 (via the C-terminal MEEVD pentapeptide). As to expression, expressed ubiquitously in the whole body. Detected predominantly in the pharyngeal muscles, vulva epithelial cells, striated body-wall muscles, spermathecae and intestinal cell ring. Also observed in the tail regions of hermaphrodite and in the sensory rays and spicules of males.

It is found in the cytoplasm. Functionally, plays a role in gonad development. Up-regulates longevity and thermotolerance. Binds daf-21/hsp90 and inhibits its ATPase activity. This Caenorhabditis elegans protein is Stress-induced-phosphoprotein 1.